A 162-amino-acid chain; its full sequence is Ribosome-binding factor A (162 aa).

Residues 121-162 (DEVARVAAGASPAGDPDPYKEPRAEDADDAEVDEPSGSRQAD) are disordered. The span at 125–136 (RVAAGASPAGDP) shows a compositional bias: low complexity.

This sequence belongs to the RbfA family. In terms of assembly, monomer. Binds 30S ribosomal subunits, but not 50S ribosomal subunits or 70S ribosomes.

Its subcellular location is the cytoplasm. In terms of biological role, one of several proteins that assist in the late maturation steps of the functional core of the 30S ribosomal subunit. Associates with free 30S ribosomal subunits (but not with 30S subunits that are part of 70S ribosomes or polysomes). Required for efficient processing of 16S rRNA. May interact with the 5'-terminal helix region of 16S rRNA. The chain is Ribosome-binding factor A from Rhodococcus jostii (strain RHA1).